Here is a 325-residue protein sequence, read N- to C-terminus: Phosphatidylserine decarboxylase proenzyme (325 aa).

Residues Asp90, His147, and Ser253 each act as charge relay system; for autoendoproteolytic cleavage activity in the active site. Ser253 acts as the Schiff-base intermediate with substrate; via pyruvic acid; for decarboxylase activity in catalysis. The residue at position 253 (Ser253) is a Pyruvic acid (Ser); by autocatalysis. The interval 281 to 325 (MASKMSSQKAITPEQTTETPVQASNEFDDNAGETKKDTPSEGADS) is disordered. Polar residues predominate over residues 284 to 305 (KMSSQKAITPEQTTETPVQASN).

This sequence belongs to the phosphatidylserine decarboxylase family. PSD-B subfamily. Prokaryotic type I sub-subfamily. Heterodimer of a large membrane-associated beta subunit and a small pyruvoyl-containing alpha subunit. It depends on pyruvate as a cofactor. Post-translationally, is synthesized initially as an inactive proenzyme. Formation of the active enzyme involves a self-maturation process in which the active site pyruvoyl group is generated from an internal serine residue via an autocatalytic post-translational modification. Two non-identical subunits are generated from the proenzyme in this reaction, and the pyruvate is formed at the N-terminus of the alpha chain, which is derived from the carboxyl end of the proenzyme. The autoendoproteolytic cleavage occurs by a canonical serine protease mechanism, in which the side chain hydroxyl group of the serine supplies its oxygen atom to form the C-terminus of the beta chain, while the remainder of the serine residue undergoes an oxidative deamination to produce ammonia and the pyruvoyl prosthetic group on the alpha chain. During this reaction, the Ser that is part of the protease active site of the proenzyme becomes the pyruvoyl prosthetic group, which constitutes an essential element of the active site of the mature decarboxylase.

Its subcellular location is the cell membrane. The catalysed reaction is a 1,2-diacyl-sn-glycero-3-phospho-L-serine + H(+) = a 1,2-diacyl-sn-glycero-3-phosphoethanolamine + CO2. It participates in phospholipid metabolism; phosphatidylethanolamine biosynthesis; phosphatidylethanolamine from CDP-diacylglycerol: step 2/2. In terms of biological role, catalyzes the formation of phosphatidylethanolamine (PtdEtn) from phosphatidylserine (PtdSer). This Alteromonas mediterranea (strain DSM 17117 / CIP 110805 / LMG 28347 / Deep ecotype) protein is Phosphatidylserine decarboxylase proenzyme.